The following is a 54-amino-acid chain: MAAKSQIIEFSLKCTECNNRNYYKKKNRNYKEKIELKKYCPHCRKHTLHVESKI.

Belongs to the bacterial ribosomal protein bL33 family.

The protein is Large ribosomal subunit protein bL33 of Petrotoga mobilis (strain DSM 10674 / SJ95).